A 167-amino-acid chain; its full sequence is Leukotoxin-activating lysine-acyltransferase LktC serotype A1 (167 aa).

Residues His22 and Asp91 contribute to the active site.

Belongs to the RTX toxin acyltransferase family.

Its subcellular location is the cytoplasm. It carries out the reaction a fatty acyl-[ACP] + L-lysyl-[protein] = N(6)-(fatty acyl)-L-lysyl-[protein] + holo-[ACP] + H(+). Involved in fatty acylation of the protoxin (LktA) at two internal lysine residues, thereby converting it to the active toxin. The sequence is that of Leukotoxin-activating lysine-acyltransferase LktC serotype A1 (lktC) from Mannheimia haemolytica (Pasteurella haemolytica).